Reading from the N-terminus, the 1537-residue chain is DNA (cytosine-5)-methyltransferase 1 (1537 aa).

Positions 1–13 (MPARSAPPPPALP) are enriched in pro residues. 2 disordered regions span residues 1–34 (MPARSAPPPPALPPALRRRLRDLERDEDSLSEKE) and 97–232 (RASN…DEKR). The region spanning 8 to 105 (PPPALPPALR…SRASNGCAGN (98 aa)) is the DMAP1-binding domain. The segment covering 21–34 (RDLERDEDSLSEKE) has biased composition (basic and acidic residues). Over residues 129 to 154 (SSSSSSSSSSSSSSSSSSSSSLLPAP) the composition is skewed to low complexity. Residues 171-194 (SPASSRVTRSSGRQPTILSVFSKG) are compositionally biased toward polar residues. The tract at residues 182 to 194 (GRQPTILSVFSKG) is interaction with PCNA. The segment covering 215–227 (KDEEEEEELEEKE) has biased composition (acidic residues). 3 residues coordinate Zn(2+): Cys263, Cys266, and His329. A Phosphoserine modification is found at Ser420. Residues 558–604 (NAMKRRRCGVCEVCQQPECGKCKACQNMVKFGGSGRSKQACLQRRCP) form a CXXC-type zinc finger. Zn(2+) contacts are provided by Cys565, Cys568, Cys571, Cys576, Cys579, Cys582, Cys598, and Cys603. Positions 614 to 638 (DEEVDDNIPEMPSPKKMLQGRKKKQ) are disordered. 2 BAH domains span residues 667–791 (ETLE…ETPP) and 883–1011 (HYRK…EDPP). Residues 1006–1050 (SFEDPPNHARSSGNKGKGKGKGKGKGKGKSSTTCEQSEPEPTELK) are disordered. 7 tandem repeats follow at residues 1020–1021 (KG), 1022–1023 (KG), 1024–1025 (KG), 1026–1027 (KG), 1028–1029 (KG), 1030–1031 (KG), and 1032–1033 (KG). Residues 1020 to 1035 (KGKGKGKGKGKGKGKS) are 8 X 2 AA tandem repeats of K-G. The segment covering 1021-1033 (GKGKGKGKGKGKG) has biased composition (basic residues). The 8; approximate repeat unit spans residues 1034-1035 (KS). Residues 1054–1513 (LRTLDVFSGC…LEIRACVGAR (460 aa)) form the SAM-dependent MTase C5-type domain. S-adenosyl-L-methionine-binding positions include Ser1061, 1065-1066 (GL), 1083-1084 (EM), 1105-1106 (DC), and Cys1106. Residue Cys1141 is part of the active site. Asn1492 and Val1494 together coordinate S-adenosyl-L-methionine. The segment at 1518–1537 (SGAAVAPPAPEKMEMTAAAD) is disordered.

This sequence belongs to the class I-like SAM-binding methyltransferase superfamily. C5-methyltransferase family. As to quaternary structure, homodimer. Interacts with PCNA. In terms of tissue distribution, testis and lung.

The protein resides in the nucleus. It carries out the reaction a 2'-deoxycytidine in DNA + S-adenosyl-L-methionine = a 5-methyl-2'-deoxycytidine in DNA + S-adenosyl-L-homocysteine + H(+). Its function is as follows. Methylates CpG residues. Preferentially methylates hemimethylated DNA. It is responsible for maintaining methylation patterns established in development. Mediates transcriptional repression by direct binding to HDAC2. Plays a role in promoter hypermethylation and transcriptional silencing of tumor suppressor genes (TSGs) or other tumor-related genes. Also required to maintain a transcriptionally repressive state of genes in undifferentiated embryonic stem cells (ESCs). Associates at promoter regions of tumor suppressor genes (TSGs) leading to their gene silencing. The polypeptide is DNA (cytosine-5)-methyltransferase 1 (DNMT1) (Gallus gallus (Chicken)).